A 282-amino-acid polypeptide reads, in one-letter code: ATP synthase gamma chain (282 aa).

This sequence belongs to the ATPase gamma chain family. As to quaternary structure, F-type ATPases have 2 components, CF(1) - the catalytic core - and CF(0) - the membrane proton channel. CF(1) has five subunits: alpha(3), beta(3), gamma(1), delta(1), epsilon(1). CF(0) has three main subunits: a, b and c.

It is found in the cell membrane. Functionally, produces ATP from ADP in the presence of a proton gradient across the membrane. The gamma chain is believed to be important in regulating ATPase activity and the flow of protons through the CF(0) complex. This is ATP synthase gamma chain from Clostridium botulinum (strain Langeland / NCTC 10281 / Type F).